Consider the following 225-residue polypeptide: NAD(P)H-quinone oxidoreductase subunit K, chloroplastic (225 aa).

Positions 43, 44, 108, and 139 each coordinate [4Fe-4S] cluster.

Belongs to the complex I 20 kDa subunit family. NDH is composed of at least 16 different subunits, 5 of which are encoded in the nucleus. [4Fe-4S] cluster is required as a cofactor.

Its subcellular location is the plastid. The protein localises to the chloroplast thylakoid membrane. It carries out the reaction a plastoquinone + NADH + (n+1) H(+)(in) = a plastoquinol + NAD(+) + n H(+)(out). It catalyses the reaction a plastoquinone + NADPH + (n+1) H(+)(in) = a plastoquinol + NADP(+) + n H(+)(out). NDH shuttles electrons from NAD(P)H:plastoquinone, via FMN and iron-sulfur (Fe-S) centers, to quinones in the photosynthetic chain and possibly in a chloroplast respiratory chain. The immediate electron acceptor for the enzyme in this species is believed to be plastoquinone. Couples the redox reaction to proton translocation, and thus conserves the redox energy in a proton gradient. The sequence is that of NAD(P)H-quinone oxidoreductase subunit K, chloroplastic from Lemna minor (Common duckweed).